Consider the following 198-residue polypeptide: Peroxiredoxin-2 (198 aa).

A2 carries the post-translational modification N-acetylalanine. The Thioredoxin domain occupies 6–164 (AHIGKPAPDF…ALRLVQAFQY (159 aa)). The active-site Cysteine sulfenic acid (-SOH) intermediate is the C51. Residue S112 is modified to Phosphoserine. Phosphothreonine is present on T182. An N6-acetyllysine modification is found at K196.

The protein belongs to the peroxiredoxin family. AhpC/Prx1 subfamily. As to quaternary structure, homodimer; disulfide-linked, upon oxidation. 5 homodimers assemble to form a ring-like decamer. Interacts with TIPIN. The enzyme can be inactivated by further oxidation of the cysteine sulfenic acid (C(P)-SOH) to sulphinic acid (C(P)-SO2H) instead of its condensation to a disulfide bond. It can be reactivated by forming a transient disulfide bond with sulfiredoxin SRXN1, which reduces the cysteine sulfinic acid in an ATP- and Mg-dependent manner. Post-translationally, acetylation increases resistance to transition to high molecular-mass complexes. Deacetylated by HDAC6 which decreases reducing activity.

Its subcellular location is the cytoplasm. It catalyses the reaction a hydroperoxide + [thioredoxin]-dithiol = an alcohol + [thioredoxin]-disulfide + H2O. Functionally, thiol-specific peroxidase that catalyzes the reduction of hydrogen peroxide and organic hydroperoxides to water and alcohols, respectively. Plays a role in cell protection against oxidative stress by detoxifying peroxides and as sensor of hydrogen peroxide-mediated signaling events. Might participate in the signaling cascades of growth factors and tumor necrosis factor-alpha by regulating the intracellular concentrations of H(2)O(2). The protein is Peroxiredoxin-2 (Prdx2) of Rattus norvegicus (Rat).